Here is a 72-residue protein sequence, read N- to C-terminus: Sec-independent protein translocase protein TatA (72 aa).

Residues 1–21 (MGSFSIWHWLIVLAVVLLLFG) form a helical membrane-spanning segment. A disordered region spans residues 43 to 72 (MADEDAKEDPRTIDAKAEEPVKDVKKTTKS). Over residues 50–72 (EDPRTIDAKAEEPVKDVKKTTKS) the composition is skewed to basic and acidic residues.

This sequence belongs to the TatA/E family. As to quaternary structure, the Tat system comprises two distinct complexes: a TatABC complex, containing multiple copies of TatA, TatB and TatC subunits, and a separate TatA complex, containing only TatA subunits. Substrates initially bind to the TatABC complex, which probably triggers association of the separate TatA complex to form the active translocon.

It localises to the cell inner membrane. In terms of biological role, part of the twin-arginine translocation (Tat) system that transports large folded proteins containing a characteristic twin-arginine motif in their signal peptide across membranes. TatA could form the protein-conducting channel of the Tat system. This Brucella suis biovar 1 (strain 1330) protein is Sec-independent protein translocase protein TatA.